A 197-amino-acid polypeptide reads, in one-letter code: NADH-quinone oxidoreductase subunit C (197 aa).

It belongs to the complex I 30 kDa subunit family. NDH-1 is composed of 14 different subunits. Subunits NuoB, C, D, E, F, and G constitute the peripheral sector of the complex.

It localises to the cell inner membrane. It carries out the reaction a quinone + NADH + 5 H(+)(in) = a quinol + NAD(+) + 4 H(+)(out). Its function is as follows. NDH-1 shuttles electrons from NADH, via FMN and iron-sulfur (Fe-S) centers, to quinones in the respiratory chain. The immediate electron acceptor for the enzyme in this species is believed to be ubiquinone. Couples the redox reaction to proton translocation (for every two electrons transferred, four hydrogen ions are translocated across the cytoplasmic membrane), and thus conserves the redox energy in a proton gradient. This is NADH-quinone oxidoreductase subunit C from Rickettsia prowazekii (strain Madrid E).